The primary structure comprises 744 residues: Photosystem I P700 chlorophyll a apoprotein A2 (744 aa).

The next 8 helical transmembrane spans lie at 48 to 71 (LFAT…FHIA), 137 to 160 (LYAG…LHLQ), 177 to 201 (LNHH…HVAI), 275 to 293 (MAHH…GHMY), 337 to 360 (LHFQ…QHMY), 376 to 402 (AALY…IFLV), 424 to 446 (AIIS…LYVH), and 527 to 545 (FLVH…LILV). Positions 569 and 578 each coordinate [4Fe-4S] cluster. Helical transmembrane passes span 585–606 (AFYL…YWHW) and 653–675 (LAVW…MFLI). His664, Met672, and Tyr680 together coordinate chlorophyll a. Trp681 is a phylloquinone binding site. A helical membrane pass occupies residues 717 to 737 (LVGLAHFTVGYVLTYAAFVIA).

It belongs to the PsaA/PsaB family. In terms of assembly, the PsaA/B heterodimer binds the P700 chlorophyll special pair and subsequent electron acceptors. PSI consists of a core antenna complex that captures photons, and an electron transfer chain that converts photonic excitation into a charge separation. The cyanobacterial PSI reaction center is composed of one copy each of PsaA,B,C,D,E,F,I,J,K,L,M and X, and forms trimeric complexes. The cofactor is PSI electron transfer chain: 5 chlorophyll a, 1 chlorophyll a', 2 phylloquinones and 3 4Fe-4S clusters. PSI core antenna: 90 chlorophyll a, 22 carotenoids, 3 phospholipids and 1 galactolipid. P700 is a chlorophyll a/chlorophyll a' dimer, A0 is one or more chlorophyll a, A1 is one or both phylloquinones and FX is a shared 4Fe-4S iron-sulfur center..

Its subcellular location is the cellular thylakoid membrane. It catalyses the reaction reduced [plastocyanin] + hnu + oxidized [2Fe-2S]-[ferredoxin] = oxidized [plastocyanin] + reduced [2Fe-2S]-[ferredoxin]. In terms of biological role, psaA and PsaB bind P700, the primary electron donor of photosystem I (PSI), as well as the electron acceptors A0, A1 and FX. PSI is a plastocyanin/cytochrome c6-ferredoxin oxidoreductase, converting photonic excitation into a charge separation, which transfers an electron from the donor P700 chlorophyll pair to the spectroscopically characterized acceptors A0, A1, FX, FA and FB in turn. Oxidized P700 is reduced on the lumenal side of the thylakoid membrane by plastocyanin or cytochrome c6. This is Photosystem I P700 chlorophyll a apoprotein A2 from Synechococcus sp. (strain JA-2-3B'a(2-13)) (Cyanobacteria bacterium Yellowstone B-Prime).